The primary structure comprises 157 residues: Transcription initiation factor IIA large subunit (157 aa).

It belongs to the TFIIA subunit 1 family. TFIIA is a heterodimer of the large subunit and the small subunit gamma.

Its subcellular location is the nucleus. Functionally, TFIIA is a component of the transcription machinery of RNA polymerase II and plays an important role in transcriptional activation. This chain is Transcription initiation factor IIA large subunit (TOA1), found in Encephalitozoon cuniculi (strain GB-M1) (Microsporidian parasite).